The primary structure comprises 231 residues: Ribose-5-phosphate isomerase A (231 aa).

Substrate-binding positions include 32–35 (TGST), 85–88 (DGAD), and 98–101 (KGGG). Catalysis depends on Glu107, which acts as the Proton acceptor. Lys125 serves as a coordination point for substrate.

It belongs to the ribose 5-phosphate isomerase family. In terms of assembly, homodimer.

It carries out the reaction aldehydo-D-ribose 5-phosphate = D-ribulose 5-phosphate. Its pathway is carbohydrate degradation; pentose phosphate pathway; D-ribose 5-phosphate from D-ribulose 5-phosphate (non-oxidative stage): step 1/1. In terms of biological role, catalyzes the reversible conversion of ribose-5-phosphate to ribulose 5-phosphate. The chain is Ribose-5-phosphate isomerase A from Burkholderia cenocepacia (strain ATCC BAA-245 / DSM 16553 / LMG 16656 / NCTC 13227 / J2315 / CF5610) (Burkholderia cepacia (strain J2315)).